Here is a 286-residue protein sequence, read N- to C-terminus: Acetyl-coenzyme A carboxylase carboxyl transferase subunit beta (286 aa).

In terms of domain architecture, CoA carboxyltransferase N-terminal spans 27 to 286 (LMTKCPKCKL…HSEETNHATI (260 aa)). Residues C31, C34, C50, and C52 each contribute to the Zn(2+) site. The C4-type zinc finger occupies 31 to 52 (CPKCKLIQYTKQLEANLKVCVC).

It belongs to the AccD/PCCB family. Acetyl-CoA carboxylase is a heterohexamer composed of biotin carboxyl carrier protein (AccB), biotin carboxylase (AccC) and two subunits each of ACCase subunit alpha (AccA) and ACCase subunit beta (AccD). The cofactor is Zn(2+).

It localises to the cytoplasm. The catalysed reaction is N(6)-carboxybiotinyl-L-lysyl-[protein] + acetyl-CoA = N(6)-biotinyl-L-lysyl-[protein] + malonyl-CoA. It functions in the pathway lipid metabolism; malonyl-CoA biosynthesis; malonyl-CoA from acetyl-CoA: step 1/1. Component of the acetyl coenzyme A carboxylase (ACC) complex. Biotin carboxylase (BC) catalyzes the carboxylation of biotin on its carrier protein (BCCP) and then the CO(2) group is transferred by the transcarboxylase to acetyl-CoA to form malonyl-CoA. This chain is Acetyl-coenzyme A carboxylase carboxyl transferase subunit beta, found in Exiguobacterium sibiricum (strain DSM 17290 / CCUG 55495 / CIP 109462 / JCM 13490 / 255-15).